Reading from the N-terminus, the 184-residue chain is Protein GrpE (184 aa).

The segment at 1–24 is disordered; the sequence is MADEQLDEKNLNSEEAGAVNGDAR.

The protein belongs to the GrpE family. Homodimer.

It localises to the cytoplasm. Participates actively in the response to hyperosmotic and heat shock by preventing the aggregation of stress-denatured proteins, in association with DnaK and GrpE. It is the nucleotide exchange factor for DnaK and may function as a thermosensor. Unfolded proteins bind initially to DnaJ; upon interaction with the DnaJ-bound protein, DnaK hydrolyzes its bound ATP, resulting in the formation of a stable complex. GrpE releases ADP from DnaK; ATP binding to DnaK triggers the release of the substrate protein, thus completing the reaction cycle. Several rounds of ATP-dependent interactions between DnaJ, DnaK and GrpE are required for fully efficient folding. The sequence is that of Protein GrpE from Pseudomonas entomophila (strain L48).